A 501-amino-acid polypeptide reads, in one-letter code: Glucose-6-phosphate isomerase (501 aa).

The disordered stretch occupies residues 78 to 101 (GIANPTENRAAEHSAERGDGAPES). Positions 86–97 (RAAEHSAERGDG) are enriched in basic and acidic residues. Glu-333 functions as the Proton donor in the catalytic mechanism. Active-site residues include His-364 and Lys-474.

This sequence belongs to the GPI family.

The protein resides in the cytoplasm. The enzyme catalyses alpha-D-glucose 6-phosphate = beta-D-fructose 6-phosphate. The protein operates within carbohydrate biosynthesis; gluconeogenesis. It functions in the pathway carbohydrate degradation; glycolysis; D-glyceraldehyde 3-phosphate and glycerone phosphate from D-glucose: step 2/4. Catalyzes the reversible isomerization of glucose-6-phosphate to fructose-6-phosphate. In Sphingopyxis alaskensis (strain DSM 13593 / LMG 18877 / RB2256) (Sphingomonas alaskensis), this protein is Glucose-6-phosphate isomerase.